A 255-amino-acid chain; its full sequence is 1-(5-phosphoribosyl)-5-[(5-phosphoribosylamino)methylideneamino] imidazole-4-carboxamide isomerase (255 aa).

Asp8 (proton acceptor) is an active-site residue. Catalysis depends on Asp129, which acts as the Proton donor.

This sequence belongs to the HisA/HisF family.

It localises to the cytoplasm. It catalyses the reaction 1-(5-phospho-beta-D-ribosyl)-5-[(5-phospho-beta-D-ribosylamino)methylideneamino]imidazole-4-carboxamide = 5-[(5-phospho-1-deoxy-D-ribulos-1-ylimino)methylamino]-1-(5-phospho-beta-D-ribosyl)imidazole-4-carboxamide. It participates in amino-acid biosynthesis; L-histidine biosynthesis; L-histidine from 5-phospho-alpha-D-ribose 1-diphosphate: step 4/9. The chain is 1-(5-phosphoribosyl)-5-[(5-phosphoribosylamino)methylideneamino] imidazole-4-carboxamide isomerase from Gloeobacter violaceus (strain ATCC 29082 / PCC 7421).